Reading from the N-terminus, the 339-residue chain is 5-dehydro-2-deoxygluconokinase (339 aa).

This sequence belongs to the carbohydrate kinase PfkB family.

It carries out the reaction 5-dehydro-2-deoxy-D-gluconate + ATP = 6-phospho-5-dehydro-2-deoxy-D-gluconate + ADP + H(+). It functions in the pathway polyol metabolism; myo-inositol degradation into acetyl-CoA; acetyl-CoA from myo-inositol: step 5/7. Functionally, catalyzes the phosphorylation of 5-dehydro-2-deoxy-D-gluconate (2-deoxy-5-keto-D-gluconate or DKG) to 6-phospho-5-dehydro-2-deoxy-D-gluconate (DKGP). This chain is 5-dehydro-2-deoxygluconokinase, found in Clostridium botulinum (strain Eklund 17B / Type B).